The primary structure comprises 249 residues: Caffeoyl-CoA O-methyltransferase 1 (249 aa).

Lysine 23 serves as a coordination point for substrate. S-adenosyl-L-methionine-binding positions include threonine 65, glutamate 87, 89–90 (GV), serine 95, aspartate 113, and alanine 142. Residue aspartate 165 coordinates substrate. Aspartate 165 is a binding site for a divalent metal cation. Position 167 (aspartate 167) interacts with S-adenosyl-L-methionine. The a divalent metal cation site is built by aspartate 191 and asparagine 192. Asparagine 196 is a substrate binding site.

It belongs to the class I-like SAM-binding methyltransferase superfamily. Cation-dependent O-methyltransferase family. CCoAMT subfamily. The cofactor is a divalent metal cation. As to expression, mostly expressed in petal limbs and tubes, and, at low levels, in flower buds, stamens, pistils, stems, roots and leaves.

Its subcellular location is the cytoplasm. It is found in the cytosol. The catalysed reaction is (E)-caffeoyl-CoA + S-adenosyl-L-methionine = (E)-feruloyl-CoA + S-adenosyl-L-homocysteine + H(+). The enzyme catalyses (E)-5-hydroxyferuloyl-CoA + S-adenosyl-L-methionine = (E)-sinapoyl-CoA + S-adenosyl-L-homocysteine + H(+). It functions in the pathway aromatic compound metabolism; phenylpropanoid biosynthesis. Functionally, involved in the production of floral volatile phenylpropanoids in flowers of fragrant cultivars (e.g. cv. Mitchell and cv. V26) from cinnamic acid, a common precursor with the anthocyanin biosynthesis pathway involved in flower pigmentation. Methylates caffeoyl-CoA to feruloyl-CoA, also able to methylate 5-hydroxyferuloyl-CoA. The chain is Caffeoyl-CoA O-methyltransferase 1 from Petunia hybrida (Petunia).